The primary structure comprises 245 residues: Adapter protein MecA (245 aa).

The protein belongs to the MecA family. Homodimer.

Its function is as follows. Enables the recognition and targeting of unfolded and aggregated proteins to the ClpC protease or to other proteins involved in proteolysis. The sequence is that of Adapter protein MecA from Streptococcus pneumoniae (strain Hungary19A-6).